The primary structure comprises 181 residues: NADH-quinone oxidoreductase subunit B (181 aa).

The [4Fe-4S] cluster site is built by Cys-45, Cys-46, Cys-111, and Cys-140.

Belongs to the complex I 20 kDa subunit family. In terms of assembly, NDH-1 is composed of 15 different subunits. Subunits NuoB, C, D, E, F, and G constitute the peripheral sector of the complex. Requires [4Fe-4S] cluster as cofactor.

The protein localises to the cell membrane. It carries out the reaction a quinone + NADH + 5 H(+)(in) = a quinol + NAD(+) + 4 H(+)(out). Functionally, NDH-1 shuttles electrons from NADH, via FMN and iron-sulfur (Fe-S) centers, to quinones in the respiratory chain. The immediate electron acceptor for the enzyme in this species is believed to be a menaquinone. Couples the redox reaction to proton translocation (for every two electrons transferred, four hydrogen ions are translocated across the cytoplasmic membrane), and thus conserves the redox energy in a proton gradient. This chain is NADH-quinone oxidoreductase subunit B, found in Deinococcus radiodurans (strain ATCC 13939 / DSM 20539 / JCM 16871 / CCUG 27074 / LMG 4051 / NBRC 15346 / NCIMB 9279 / VKM B-1422 / R1).